The following is a 415-amino-acid chain: GPI mannosyltransferase 1 (415 aa).

9 helical membrane passes run 8–28 (PSLVFGAAIVLRAILLVYGAW), 82–102 (FFSFGKVLFALSDVVAGWLIA), 134–154 (TRGSSEGLLCVLVIALLWAVL), 158–178 (ITLAGVLLGLSVHFKIYPFVY), 222–242 (LLLTTTALATFSGLNISMYIL), 284–304 (FESLAFIPQLLLSVVVIPIVL), 329–349 (SQYFLWYLIFLPFYLPSSSLM), 354–374 (LGITVTALWVIAQALWLQQGY), and 387–407 (GLFLASLGFFAVNIWILGIII).

It belongs to the PIGM family.

Its subcellular location is the endoplasmic reticulum membrane. It functions in the pathway glycolipid biosynthesis; glycosylphosphatidylinositol-anchor biosynthesis. Its function is as follows. Mannosyltransferase involved in glycosylphosphatidylinositol-anchor biosynthesis. Transfers the first alpha-1,4-mannose to GlcN-acyl-PI during GPI precursor assembly. Required for cell wall integrity. The protein is GPI mannosyltransferase 1 (gpi14) of Aspergillus oryzae (strain ATCC 42149 / RIB 40) (Yellow koji mold).